A 360-amino-acid polypeptide reads, in one-letter code: Peptide chain release factor 1 (360 aa).

Position 235 is an N5-methylglutamine (Q235). The segment at 284–313 (AKRQQAEASTRRNLLGSGDRSDRNRTYNFP) is disordered.

This sequence belongs to the prokaryotic/mitochondrial release factor family. Methylated by PrmC. Methylation increases the termination efficiency of RF1.

The protein resides in the cytoplasm. In terms of biological role, peptide chain release factor 1 directs the termination of translation in response to the peptide chain termination codons UAG and UAA. The polypeptide is Peptide chain release factor 1 (Salmonella schwarzengrund (strain CVM19633)).